A 70-amino-acid chain; its full sequence is QTWPPVEDRPHCKRCVACTLMWPPEANRCVCGDLVPKCHKGCSQCEKADTRSGRPLYKCLSFEYYNCAAD.

Intrachain disulfides connect Cys12/Cys31, Cys18/Cys29, Cys38/Cys45, and Cys42/Cys59.

It belongs to the Bowman-Birk serine protease inhibitor family. In terms of tissue distribution, expressed in bulb (at protein level).

Its function is as follows. Serine protease inhibitor. Strongly inhibits trypsin (Ki = 7.1 nM) and almost completely inhibits elastase. Also inhibits chymotrypsin (Ki = 19 nM). Does not inhibit bacterial subtilisin. The protein is Bowman-Birk type proteinase inhibitor A7 of Hyacinthus orientalis (Common hyacinth).